A 297-amino-acid polypeptide reads, in one-letter code: Palmitoyl-protein thioesterase ABHD10, mitochondrial (297 aa).

The transit peptide at 1 to 43 (MAAWAPCRRWGWAAVSFGRHPGLSASLARKPPRAWWLSACRQK) directs the protein to the mitochondrion. The 128-residue stretch at 69-196 (IIFIPGYLSN…EIEMKGEWTL (128 aa)) folds into the AB hydrolase-1 domain. Catalysis depends on charge relay system residues serine 143, aspartate 240, and histidine 270.

It belongs to the AB hydrolase superfamily.

Its subcellular location is the mitochondrion. It carries out the reaction S-hexadecanoyl-L-cysteinyl-[protein] + H2O = L-cysteinyl-[protein] + hexadecanoate + H(+). The catalysed reaction is mycophenolic acid O-acyl-beta-D-glucuronide + H2O = mycophenolate + D-glucuronate + H(+). Inhibited by palmostatin-B. Acts as an acyl-protein thioesterase that hydrolyzes fatty acids from acylated residues in proteins. Regulates the mitochondrial S-depalmitoylation of the nucleophilic active site residue of peroxiredoxin-5/PRDX5, a key antioxidant protein, therefore modulating mitochondrial antioxidant ability. Also catalyzes the deglucuronidation of mycophenolic acid acyl-glucuronide, an active metabolite of the immunosuppressant drug mycophenolate. The protein is Palmitoyl-protein thioesterase ABHD10, mitochondrial of Mus musculus (Mouse).